The sequence spans 304 residues: Homoserine kinase (304 aa).

ATP is bound at residue 90–100 (PLARGLGSSAS).

It belongs to the GHMP kinase family. Homoserine kinase subfamily.

It is found in the cytoplasm. It carries out the reaction L-homoserine + ATP = O-phospho-L-homoserine + ADP + H(+). It participates in amino-acid biosynthesis; L-threonine biosynthesis; L-threonine from L-aspartate: step 4/5. Catalyzes the ATP-dependent phosphorylation of L-homoserine to L-homoserine phosphate. The polypeptide is Homoserine kinase (Staphylococcus aureus (strain JH9)).